Reading from the N-terminus, the 1271-residue chain is ATP-dependent helicase/nuclease subunit A (1271 aa).

In terms of domain architecture, UvrD-like helicase ATP-binding spans threonine 3 to arginine 476. Alanine 24–threonine 31 contributes to the ATP binding site. A UvrD-like helicase C-terminal domain is found at isoleucine 528 to glycine 824.

It belongs to the helicase family. AddA subfamily. Heterodimer of AddA and AddB/RexB. Requires Mg(2+) as cofactor.

The enzyme catalyses Couples ATP hydrolysis with the unwinding of duplex DNA by translocating in the 3'-5' direction.. It carries out the reaction ATP + H2O = ADP + phosphate + H(+). Functionally, the heterodimer acts as both an ATP-dependent DNA helicase and an ATP-dependent, dual-direction single-stranded exonuclease. Recognizes the chi site generating a DNA molecule suitable for the initiation of homologous recombination. The AddA nuclease domain is required for chi fragment generation; this subunit has the helicase and 3' -&gt; 5' nuclease activities. The protein is ATP-dependent helicase/nuclease subunit A of Clostridium perfringens (strain ATCC 13124 / DSM 756 / JCM 1290 / NCIMB 6125 / NCTC 8237 / Type A).